Consider the following 308-residue polypeptide: Apolipoprotein E (308 aa).

An N-terminal signal peptide occupies residues 1–18; sequence MKFLWAALVVTLLAGCQA. Repeat copies occupy residues 75–96, 97–118, 119–140, 141–162, 163–184, 185–206, 207–224, and 225–246. The interval 75–246 is 8 X 22 AA approximate tandem repeats; that stretch reads LLIEETMKEV…RLDDVRDQME (172 aa). The interval 153–163 is LDL and other lipoprotein receptors binding; it reads HLRKLRKRLLR. Residue 157 to 160 participates in heparin binding; the sequence is LRKR. Residues 205–281 are lipid-binding and lipoprotein association; sequence AIPPSQQLRE…SWFEPLVQDM (77 aa). Residue 220–227 participates in heparin binding; sequence GQKVRGRL. Residues 257–308 form a homooligomerization region; that stretch reads SQVRLQAEAFQTRLKSWFEPLVQDMQRQWASLVEKVQSSLGISPSTKPSKTK. Residues 269–281 form a specificity for association with VLDL region; sequence RLKSWFEPLVQDM.

The protein belongs to the apolipoprotein A1/A4/E family. As to quaternary structure, homotetramer. May interact with ABCA1; functionally associated with ABCA1 in the biogenesis of HDLs. May interact with APP/A4 amyloid-beta peptide; the interaction is extremely stable in vitro but its physiological significance is unclear. May interact with MAPT. May interact with MAP2. In the cerebrospinal fluid, interacts with secreted SORL1. Interacts with PMEL; this allows the loading of PMEL luminal fragment on ILVs to induce fibril nucleation. Post-translationally, APOE exists as multiple glycosylated and sialylated glycoforms within cells and in plasma. The extent of glycosylation and sialylation are tissue and context specific. In terms of processing, glycated in plasma VLDL. Phosphorylated by FAM20C in the extracellular medium.

It is found in the secreted. Its subcellular location is the extracellular space. The protein localises to the extracellular matrix. It localises to the extracellular vesicle. The protein resides in the endosome. It is found in the multivesicular body. Functionally, APOE is an apolipoprotein, a protein associating with lipid particles, that mainly functions in lipoprotein-mediated lipid transport between organs via the plasma and interstitial fluids. APOE is a core component of plasma lipoproteins and is involved in their production, conversion and clearance. Apolipoproteins are amphipathic molecules that interact both with lipids of the lipoprotein particle core and the aqueous environment of the plasma. As such, APOE associates with chylomicrons, chylomicron remnants, very low density lipoproteins (VLDL) and intermediate density lipoproteins (IDL) but shows a preferential binding to high-density lipoproteins (HDL). It also binds a wide range of cellular receptors including the LDL receptor/LDLR and the very low-density lipoprotein receptor/VLDLR that mediate the cellular uptake of the APOE-containing lipoprotein particles. Finally, APOE also has a heparin-binding activity and binds heparan-sulfate proteoglycans on the surface of cells, a property that supports the capture and the receptor-mediated uptake of APOE-containing lipoproteins by cells. The chain is Apolipoprotein E (APOE) from Pteropus alecto (Black flying fox).